The chain runs to 200 residues: NAD--protein ADP-ribosyltransferase modA (200 aa).

An NAD(+)-binding site is contributed by Arg72. Glu165 is a catalytic residue.

It belongs to the Tevenvirinae NAD--protein ADP-ribosyltransferase modA family.

It localises to the virion. It carries out the reaction L-arginyl-[protein] + NAD(+) = N(omega)-(ADP-D-ribosyl)-L-arginyl-[protein] + nicotinamide + H(+). Its function is as follows. ADP-ribosyltransferase that efficiently ADP-ribosylates both alpha subunits of host RNA polymerase RPOA. The ModA-induced ADP-ribosylation of RPOA alpha subunits inhibits transcription from viral early promoters. The sequence is that of NAD--protein ADP-ribosyltransferase modA from Enterobacteria phage T4 (Bacteriophage T4).